A 327-amino-acid polypeptide reads, in one-letter code: Beta-1,4-galactosyltransferase 7 (327 aa).

Residues 1-30 (MLPSRRKAAQLPWEDGRARLLPGGLRRKCS) are Cytoplasmic-facing. Residues 31 to 51 (IFHLFIAFLLLVFFSLLWLQL) traverse the membrane as a helical; Signal-anchor for type II membrane protein segment. At 52–327 (SCSGDMAQVT…KTATPWCIFG (276 aa)) the chain is on the lumenal side. A disordered region spans residues 61 to 88 (TRGQGQETSGPPRACPPEPPPEHWEEDE). UDP-alpha-D-galactose contacts are provided by residues 100-104 (PFRER) and 139-141 (FNR). Residue N154 is glycosylated (N-linked (GlcNAc...) asparagine). UDP-alpha-D-galactose-binding positions include 164–165 (VD), Y194, and W224. D165 contributes to the Mn(2+) binding site. N-acetyl-D-glucosamine is bound at residue 226–229 (REDD). H257 provides a ligand contact to Mn(2+). Residues 257–259 (HLH) and R266 each bind UDP-alpha-D-galactose.

Belongs to the glycosyltransferase 7 family. Mn(2+) serves as cofactor.

It localises to the golgi apparatus. The protein resides in the golgi stack membrane. It catalyses the reaction 3-O-(beta-D-xylosyl)-L-seryl-[protein] + UDP-alpha-D-galactose = 3-O-(beta-D-galactosyl-(1-&gt;4)-beta-D-xylosyl)-L-seryl-[protein] + UDP + H(+). Its pathway is protein modification; protein glycosylation. Functionally, required for the biosynthesis of the tetrasaccharide linkage region of proteoglycans, especially for small proteoglycans in skin fibroblasts. The polypeptide is Beta-1,4-galactosyltransferase 7 (B4galt7) (Mus musculus (Mouse)).